The following is an 802-amino-acid chain: Aldehyde dehydrogenase family 16 member A1 (802 aa).

This sequence belongs to the aldehyde dehydrogenase family. As to quaternary structure, interacts with SPG21.

The protein is Aldehyde dehydrogenase family 16 member A1 (Aldh16a1) of Mus musculus (Mouse).